The chain runs to 715 residues: MNVIAILNHMGVYFKEEPIRELHRALERLNFQIVYPNDRDDLLKLIENNARLCGVIFDWDKYNLELCEEISKMNENLPLYAFANTYSTLDVSLNDLRLQISFFEYALGAAEDIANKIKQTTDEYINTILPPLTKALFKYVREGKYTFCTPGHMGGTAFQKSPVGSLFYDFFGPNTMKSDISISVSELGSLLDHSGPHKEAEQYIARVFNADRSYMVTNGTSTANKIVGMYSAPAGSTILIDRNCHKSLTHLMMMSDVTPIYFRPTRNAYGILGGIPQSEFQHATIAKRVKETPNATWPVHAVITNSTYDGLLYNTDFIKKTLDVKSIHFDSAWVPYTNFSPIYEGKCGMSGGRVEGKVIYETQSTHKLLAAFSQASMIHVKGDVNEETFNEAYMMHTTTSPHYGIVASTETAAAMMKGNAGKRLINGSIERAIKFRKEIKRLRTESDGWFFDVWQPDHIDTTECWPLRSDSTWHGFKNIDNEHMYLDPIKVTLLTPGMEKDGTMSDFGIPASIVAKYLDEHGIVVEKTGPYNLLFLFSIGIDKTKALSLLRALTDFKRAFDLNLRVKNMLPSLYREDPEFYENMRIQELAQNIHKLIVHHNLPDLMYRAFEVLPTMVMTPYAAFQKELHGMTEEVYLDEMVGRINANMILPYPPGVPLVMPGEMITEESRPVLEFLQMLCEIGAHYPGFETDIHGAYRQADGRYTVKVLKEESKK.

The residue at position 367 (Lys-367) is an N6-(pyridoxal phosphate)lysine.

It belongs to the Orn/Lys/Arg decarboxylase class-I family. Homodecamer. Interacts with RavA. Pyridoxal 5'-phosphate is required as a cofactor.

The protein localises to the cytoplasm. It carries out the reaction L-lysine + H(+) = cadaverine + CO2. In Escherichia coli O157:H7, this protein is Inducible lysine decarboxylase (cadA).